Consider the following 288-residue polypeptide: Orotidine 5'-phosphate decarboxylase (288 aa).

Catalysis depends on Lys99, which acts as the Proton donor.

Belongs to the OMP decarboxylase family. Type 2 subfamily.

It catalyses the reaction orotidine 5'-phosphate + H(+) = UMP + CO2. The protein operates within pyrimidine metabolism; UMP biosynthesis via de novo pathway; UMP from orotate: step 2/2. The chain is Orotidine 5'-phosphate decarboxylase (pyrF) from Myxococcus xanthus (strain DK1622).